The primary structure comprises 227 residues: Adenylate kinase (227 aa).

Residue 21 to 26 (GAGKGT) participates in ATP binding. The tract at residues 41–70 (ATGDMLRSQVAKQTPLGIEAKKIMDDGKLV) is NMP. AMP-binding positions include Thr-42, Arg-47, 68 to 70 (KLV), 97 to 100 (GFPR), and Gln-104. An LID region spans residues 138–175 (GRLVHPASGRSYHKVFNPPKTEMKDDITGEDLVQRSDD). Residues Arg-139 and 148–149 (SY) contribute to the ATP site. AMP-binding residues include Arg-172 and Arg-183. ATP is bound at residue Gln-211.

This sequence belongs to the adenylate kinase family. AK2 subfamily. Monomer.

It is found in the cytoplasm. Its subcellular location is the cytosol. It localises to the mitochondrion intermembrane space. The catalysed reaction is AMP + ATP = 2 ADP. Catalyzes the reversible transfer of the terminal phosphate group between ATP and AMP. Plays an important role in cellular energy homeostasis and in adenine nucleotide metabolism. Adenylate kinase activity is critical for regulation of the phosphate utilization and the AMP de novo biosynthesis pathways. The protein is Adenylate kinase of Kluyveromyces lactis (strain ATCC 8585 / CBS 2359 / DSM 70799 / NBRC 1267 / NRRL Y-1140 / WM37) (Yeast).